The primary structure comprises 239 residues: Fatty acid metabolism regulator protein (239 aa).

In terms of domain architecture, HTH gntR-type spans 6-74 (QSPAGFAEEY…HGKPTKVNNF (69 aa)). The segment at residues 34 to 53 (ERELSELIGVTRTTLREVLQ) is a DNA-binding region (H-T-H motif).

In terms of assembly, homodimer.

It is found in the cytoplasm. In terms of biological role, multifunctional regulator of fatty acid metabolism. This chain is Fatty acid metabolism regulator protein, found in Escherichia fergusonii (strain ATCC 35469 / DSM 13698 / CCUG 18766 / IAM 14443 / JCM 21226 / LMG 7866 / NBRC 102419 / NCTC 12128 / CDC 0568-73).